Reading from the N-terminus, the 98-residue chain is Large ribosomal subunit protein uL23 (98 aa).

The protein belongs to the universal ribosomal protein uL23 family. As to quaternary structure, part of the 50S ribosomal subunit. Contacts protein L29, and trigger factor when it is bound to the ribosome.

One of the early assembly proteins it binds 23S rRNA. One of the proteins that surrounds the polypeptide exit tunnel on the outside of the ribosome. Forms the main docking site for trigger factor binding to the ribosome. The chain is Large ribosomal subunit protein uL23 from Teredinibacter turnerae (strain ATCC 39867 / T7901).